Consider the following 147-residue polypeptide: MVVKQQKDASKPAHFFHQVIVIALVLFVSKIIESFMPIPMPGSVIGLVLLFVLLCTGAVKLGEVEKVGTTLTNNIGLLFVPAGISVVNSLGVISQAPFLIIGLIIVSTILLLICTGYVTQIIMKVTSRSKGDKVTKKIKIEEAQAHD.

4 helical membrane-spanning segments follow: residues 12–32 (PAHF…SKII), 35–55 (FMPI…VLLC), 74–94 (NIGL…GVIS), and 98–118 (FLII…TGYV).

It belongs to the CidA/LrgA family. LrgA subfamily.

It localises to the cell membrane. Inhibits the expression or activity of extracellular murein hydrolases by interacting, possibly with LrgB, with the holin-like proteins CidA and/or CidB. The LrgAB and CidAB proteins may affect the proton motive force of the membrane. May be involved in programmed cell death (PCD), possibly triggering PCD in response to antibiotics and environmental stresses. The chain is Antiholin-like protein LrgA from Staphylococcus aureus (strain MSSA476).